Consider the following 242-residue polypeptide: Probable transcriptional regulatory protein lhv_0777 (242 aa).

The segment at 1-22 is disordered; it reads MSGHSKWHNIQGRKNAQDAKRG.

This sequence belongs to the TACO1 family.

The protein resides in the cytoplasm. In Lactobacillus helveticus (strain DPC 4571), this protein is Probable transcriptional regulatory protein lhv_0777.